The following is a 252-amino-acid chain: 3-dehydroquinate dehydratase (252 aa).

Residues 46-48 and R82 each bind 3-dehydroquinate; that span reads EWR. H143 serves as the catalytic Proton donor/acceptor. Catalysis depends on K170, which acts as the Schiff-base intermediate with substrate. 3-dehydroquinate is bound by residues R212, S231, and Q235.

The protein belongs to the type-I 3-dehydroquinase family. Homodimer.

The enzyme catalyses 3-dehydroquinate = 3-dehydroshikimate + H2O. It functions in the pathway metabolic intermediate biosynthesis; chorismate biosynthesis; chorismate from D-erythrose 4-phosphate and phosphoenolpyruvate: step 3/7. Functionally, involved in the third step of the chorismate pathway, which leads to the biosynthesis of aromatic amino acids. Catalyzes the cis-dehydration of 3-dehydroquinate (DHQ) and introduces the first double bond of the aromatic ring to yield 3-dehydroshikimate. In Listeria welshimeri serovar 6b (strain ATCC 35897 / DSM 20650 / CCUG 15529 / CIP 8149 / NCTC 11857 / SLCC 5334 / V8), this protein is 3-dehydroquinate dehydratase.